A 541-amino-acid polypeptide reads, in one-letter code: Chaperonin GroEL 2 (541 aa).

Residues 29 to 32 (TLGP), 86 to 90 (DGTTT), Gly413, 478 to 480 (NAA), and Asp494 each bind ATP.

The protein belongs to the chaperonin (HSP60) family. Forms a cylinder of 14 subunits composed of two heptameric rings stacked back-to-back. Interacts with the co-chaperonin GroES.

Its subcellular location is the cytoplasm. The catalysed reaction is ATP + H2O + a folded polypeptide = ADP + phosphate + an unfolded polypeptide.. Its function is as follows. Together with its co-chaperonin GroES, plays an essential role in assisting protein folding. The GroEL-GroES system forms a nano-cage that allows encapsulation of the non-native substrate proteins and provides a physical environment optimized to promote and accelerate protein folding. The chain is Chaperonin GroEL 2 from Corynebacterium jeikeium (strain K411).